The sequence spans 571 residues: Vesicle-associated protein 1-4 (571 aa).

The MSP 1 domain occupies 1–126; sequence MSTDELLTFD…EETIFKIIYV (126 aa). The segment at 132–154 is disordered; sequence QSPVQEGLEDGSSPSASVSDKGN. Polar residues predominate over residues 143–153; the sequence is SSPSASVSDKG. The 121-residue stretch at 176–296 folds into the MSP 2 domain; that stretch reads LLIIDPVDVQ…EETRLKVMYV (121 aa). The tract at residues 297–322 is disordered; that stretch reads TPPQPPSPVQEGTEEGSSPRASVSDN. The segment covering 311–322 has biased composition (polar residues); it reads EGSSPRASVSDN. The TIR domain maps to 356 to 493; that stretch reads PQYQVFINFR…KWKEALSSVF (138 aa). E430 is a catalytic residue.

This sequence belongs to the VAMP-associated protein (VAP) (TC 9.B.17) family.

It carries out the reaction NAD(+) + H2O = ADP-D-ribose + nicotinamide + H(+). May play a role in vesicle trafficking. The protein is Vesicle-associated protein 1-4 (PVA14) of Arabidopsis thaliana (Mouse-ear cress).